A 655-amino-acid polypeptide reads, in one-letter code: uncharacterized protein (655 aa).

The N-terminal stretch at 1–23 is a signal peptide; sequence MKRTIKYLSFLGLIPFLSITTIS. Cysteine 24 carries N-palmitoyl cysteine lipidation. A lipid anchor (S-diacylglycerol cysteine) is attached at cysteine 24.

This sequence belongs to the MG067/MG068/MG395 family.

It is found in the cell membrane. This is an uncharacterized protein from Mycoplasma capricolum subsp. capricolum (strain California kid / ATCC 27343 / NCTC 10154).